Consider the following 246-residue polypeptide: NLP effector protein Pc118548 (246 aa).

An N-terminal signal peptide occupies residues 1–19 (MNFRAFLLAAIAGIATINA). A Hepta-peptide GHRHDWE motif motif is present at residues 122 to 128 (GHRHYWE). N-linked (GlcNAc...) asparagine glycosylation occurs at N141.

The protein belongs to the Necrosis inducing protein (NPP1) family.

Its subcellular location is the secreted. Functionally, secreted effector that contributes strongly to virulence during infection by P.capsici. Induces cell death in the Solanaceae, including Nicotiana benthamiana and hot pepper. In Phytophthora capsici, this protein is NLP effector protein Pc118548.